A 520-amino-acid polypeptide reads, in one-letter code: Beta-galactoside-specific lectin 4 (520 aa).

An N-linked (GlcNAc...) asparagine glycan is attached at Asn-107. Glu-159 is a catalytic residue. Cys-240 and Cys-266 are oxidised to a cystine. A propeptide spans 241–265 (connecting peptide); that stretch reads GERPSSSDVRYWPLVIRPVIADDVT. One can recognise a Ricin B-type lectin 1 domain in the interval 269–396; it reads SEPTVRIVGR…YTLGQGWLAG (128 aa). 284–286 is a binding site for D-galactose; sequence DVR. A glycan (N-linked (GlcNAc...) asparagine) is linked at Asn-322. Cys-325 and Cys-342 form a disulfide bridge. Residues Asn-357 and Asn-397 are each glycosylated (N-linked (GlcNAc...) asparagine). Residues 400–520 form the Ricin B-type lectin 2 domain; it reads APREVTIYGF…KPNQMWLPVP (121 aa). 2 cysteine pairs are disulfide-bonded: Cys-413-Cys-426 and Cys-451-Cys-467. 494–496 contributes to the D-galactose binding site; it reads DVA.

Belongs to the ribosome-inactivating protein family. Type 2 RIP subfamily. Disulfide-linked dimer of A and B chains.

The enzyme catalyses Endohydrolysis of the N-glycosidic bond at one specific adenosine on the 28S rRNA.. In terms of biological role, the A chain is responsible for inhibiting protein synthesis through the catalytic inactivation of 60S ribosomal subunits by removing adenine from position 4,324 of 28S rRNA. The B chain binds to cell receptors and probably facilitates the entry into the cell of the A chain; B chains are also responsible for cell agglutination (lectin activity). Inhibits growth of the human tumor cell line Molt4. In Viscum album (European mistletoe), this protein is Beta-galactoside-specific lectin 4.